We begin with the raw amino-acid sequence, 321 residues long: Cytochrome c biogenesis protein CcsA (321 aa).

7 consecutive transmembrane segments (helical) span residues 9 to 29 (ILTHISFSTISIVITIHLITL), 44 to 64 (GMIATFFSITGFLVSRWVSSG), 68 to 88 (LSNLYESLIFLSWTLYILHTI), 143 to 163 (MLLSYATLLCGSLLSAALLII), 225 to 245 (VISLGFTLLTVGILCGAVWAN), 259 to 273 (TWAFITWTIFAIYLH), and 288 to 308 (VASIGFLIIWICYFGINLLGI).

It belongs to the CcmF/CycK/Ccl1/NrfE/CcsA family. As to quaternary structure, may interact with Ccs1.

It localises to the plastid. The protein localises to the chloroplast thylakoid membrane. Functionally, required during biogenesis of c-type cytochromes (cytochrome c6 and cytochrome f) at the step of heme attachment. In Zea mays (Maize), this protein is Cytochrome c biogenesis protein CcsA.